Here is a 594-residue protein sequence, read N- to C-terminus: UvrABC system protein C (594 aa).

One can recognise a GIY-YIG domain in the interval 14 to 91 (DQPGCYLMKD…IKKHDPKYNI (78 aa)). Positions 196–231 (KEVRSELETKMYEASEKLEFERAKELRDQIAHIDAI) constitute a UVR domain.

It belongs to the UvrC family. As to quaternary structure, interacts with UvrB in an incision complex.

It localises to the cytoplasm. Functionally, the UvrABC repair system catalyzes the recognition and processing of DNA lesions. UvrC both incises the 5' and 3' sides of the lesion. The N-terminal half is responsible for the 3' incision and the C-terminal half is responsible for the 5' incision. The polypeptide is UvrABC system protein C (Bacillus thuringiensis (strain Al Hakam)).